The sequence spans 525 residues: ADP-ribosylation factor GTPase-activating protein 3 (525 aa).

The Arf-GAP domain occupies 10 to 126; that stretch reads LAIFKRLRSV…IKTLATQATR (117 aa). The C4-type zinc finger occupies 25–48; that stretch reads CFDCGAKNPSWASISYGVFLCIDC. Residues 160 to 233 form a disordered region; it reads VSGATQASAQ…KGLGAKKGSL (74 aa). The segment covering 162–177 has biased composition (polar residues); that stretch reads GATQASAQPEPASSTP. The segment covering 222 to 233 has biased composition (low complexity); it reads AKKGLGAKKGSL. A phosphoserine mark is found at S232, S242, S271, and S275. Residues 249–271 are disordered; that stretch reads QAQAVDKRKEQEDLARGTPKEES. Residues 293–305 are compositionally biased toward basic and acidic residues; it reads LNLSGQKKAEAER. Disordered regions lie at residues 293–364 and 377–428; these read LNLS…SSSR and FSSW…EAQK. A compositionally biased stretch (polar residues) spans 319–333; sequence HSVTSDMQTIEQESP. Residue S332 is modified to Phosphoserine. The span at 349–363 shows a compositional bias: low complexity; it reads SYFSSSSKWSEQSSS. S379 is subject to Phosphoserine. Residues 387 to 398 show a composition bias toward basic and acidic residues; sequence YWKKDSSRDPEP. Phosphoserine occurs at positions 437, 460, 462, 464, 466, and 467.

It localises to the cytoplasm. The protein localises to the golgi apparatus membrane. GAP activity stimulated by phosphatidylinositol 4,5-bisphosphate (PIP2). GTPase-activating protein (GAP) for ADP ribosylation factor 1 (ARF1). Hydrolysis of ARF1-bound GTP may lead to dissociation of coatomer from Golgi-derived membranes to allow fusion with target membranes. This is ADP-ribosylation factor GTPase-activating protein 3 from Rattus norvegicus (Rat).